A 43-amino-acid chain; its full sequence is Methionine aminopeptidase (43 aa).

Belongs to the peptidase M24A family. Methionine aminopeptidase type 1 subfamily. Monomer. Requires Co(2+) as cofactor. It depends on Zn(2+) as a cofactor. The cofactor is Mn(2+). Fe(2+) is required as a cofactor.

It carries out the reaction Release of N-terminal amino acids, preferentially methionine, from peptides and arylamides.. Its function is as follows. Removes the N-terminal methionine from nascent proteins. The N-terminal methionine is often cleaved when the second residue in the primary sequence is small and uncharged (Met-Ala-, Cys, Gly, Pro, Ser, Thr, or Val). Requires deformylation of the N(alpha)-formylated initiator methionine before it can be hydrolyzed. This chain is Methionine aminopeptidase (map), found in Klebsiella oxytoca.